The primary structure comprises 294 residues: MTTIAFLGLGNMGAPMSANLVGAGHVVRGFDPAPTAASGAAAHGVAVFRSAPEAVAEADVVITMLPTGEVVRRCYTDVLAAARPATLFIDSSTISVTDAREVHALAESHGMLQLDAPVSGGVKGAAAATLAFMVGGDESTLRRARPVLEPMAGKIIHCGAAGAGQAAKVCNNMVLAVQQIAIAEAFVLAEKLGLSAQSLFDVITGATGNCWAVHTNCPVPGPVPTSPANNDFKPGFSTALMNKDLGLAMDAVAATGATAPLGSHAADIYAKFAADHADLDFSAVIHTLRARADA.

NAD(+)-binding positions include 3 to 31 (TIAFLGLGNMGAPMSANLVGAGHVVRGFD) and Thr93. The active site involves Lys168. Residue Lys243 participates in NAD(+) binding.

The protein belongs to the HIBADH-related family.

It catalyses the reaction 3-hydroxy-2-methylpropanoate + NAD(+) = 2-methyl-3-oxopropanoate + NADH + H(+). It participates in amino-acid degradation; L-valine degradation. The polypeptide is Probable 3-hydroxyisobutyrate dehydrogenase (mmsB) (Mycobacterium bovis (strain ATCC BAA-935 / AF2122/97)).